The primary structure comprises 746 residues: Proline--tRNA ligase (746 aa).

Residues 1 to 223 form a required for editing of incorrectly charged tRNA region; it reads MNNNTNGEII…NSNNNNNNNN (223 aa). Basic and acidic residues predominate over residues 181 to 201; sequence TSKARVDKKEDVQEEMAKNEE. The interval 181–226 is disordered; the sequence is TSKARVDKKEDVQEEMAKNEELQNNNNNNKNNSNSNNNNNNNNNHI. A compositionally biased stretch (low complexity) spans 204 to 224; that stretch reads NNNNNNKNNSNSNNNNNNNNN. Arg390 provides a ligand contact to L-proline. ATP-binding positions include 390 to 394, 401 to 405, and 475 to 477; these read RWEFK, RTREF, and QAA. His480 contacts L-proline. Position 512–514 (512–514) interacts with ATP; sequence TTR.

It belongs to the class-II aminoacyl-tRNA synthetase family. ProS type 3 subfamily. Homodimer.

It is found in the cytoplasm. It carries out the reaction tRNA(Pro) + L-proline + ATP = L-prolyl-tRNA(Pro) + AMP + diphosphate. Inhibited by the quinazolinone-based compound febrifugine from the Chinese plant Dichroa febrifuga which is used to treat malaria-associated fever. Also inhibited by febrifugine derivatives such as halofuginone. In terms of biological role, catalyzes the attachment of proline to tRNA(Pro) in a two-step reaction: proline is first activated by ATP to form Pro-AMP and then transferred to the acceptor end of tRNA(Pro). Functions in trans to edit the amino acid moiety from incorrectly charged Ala-tRNA(Pro). Has no activity on correctly charged Pro-tRNA(Pro) or Ala-tRNA(Ala). The protein is Proline--tRNA ligase of Plasmodium falciparum (isolate 3D7).